Reading from the N-terminus, the 341-residue chain is tRNA N6-adenosine threonylcarbamoyltransferase (341 aa).

Fe cation-binding residues include His111 and His115. Substrate contacts are provided by residues 134-138, Asp167, Gly180, and Asn276; that span reads LVSGG. Asp304 lines the Fe cation pocket.

This sequence belongs to the KAE1 / TsaD family. Fe(2+) is required as a cofactor.

The protein localises to the cytoplasm. The catalysed reaction is L-threonylcarbamoyladenylate + adenosine(37) in tRNA = N(6)-L-threonylcarbamoyladenosine(37) in tRNA + AMP + H(+). Functionally, required for the formation of a threonylcarbamoyl group on adenosine at position 37 (t(6)A37) in tRNAs that read codons beginning with adenine. Is involved in the transfer of the threonylcarbamoyl moiety of threonylcarbamoyl-AMP (TC-AMP) to the N6 group of A37, together with TsaE and TsaB. TsaD likely plays a direct catalytic role in this reaction. In Pseudomonas syringae pv. tomato (strain ATCC BAA-871 / DC3000), this protein is tRNA N6-adenosine threonylcarbamoyltransferase.